The primary structure comprises 365 residues: 4-hydroxy-3-methylbut-2-en-1-yl diphosphate synthase (flavodoxin) (365 aa).

Residues Cys-270, Cys-273, Cys-305, and Glu-312 each contribute to the [4Fe-4S] cluster site.

The protein belongs to the IspG family. It depends on [4Fe-4S] cluster as a cofactor.

It catalyses the reaction (2E)-4-hydroxy-3-methylbut-2-enyl diphosphate + 2 oxidized [2Fe-2S]-[ferredoxin] + H2O = 2-C-methyl-D-erythritol 2,4-cyclic diphosphate + 2 reduced [2Fe-2S]-[ferredoxin] + H(+). The enzyme catalyses (2E)-4-hydroxy-3-methylbut-2-enyl diphosphate + oxidized [flavodoxin] + H2O + 2 H(+) = 2-C-methyl-D-erythritol 2,4-cyclic diphosphate + reduced [flavodoxin]. Its pathway is isoprenoid biosynthesis; isopentenyl diphosphate biosynthesis via DXP pathway; isopentenyl diphosphate from 1-deoxy-D-xylulose 5-phosphate: step 5/6. Converts 2C-methyl-D-erythritol 2,4-cyclodiphosphate (ME-2,4cPP) into 1-hydroxy-2-methyl-2-(E)-butenyl 4-diphosphate. Involved in density-dependent regulation of 2'-N-acetyltransferase. This is 4-hydroxy-3-methylbut-2-en-1-yl diphosphate synthase (flavodoxin) from Providencia stuartii.